The primary structure comprises 343 residues: Aspartate beta-hydroxylase domain-containing protein 2 (343 aa).

Over 1-31 (MWLEWLVAWSWSLDGLRDCIATGIQSVRDCD) the chain is Cytoplasmic. A helical membrane pass occupies residues 32 to 52 (GTAVITVACLLVLFVWYCYHV). Residues 53 to 343 (GREQPRPHVS…ALDFIFAPGR (291 aa)) lie on the Lumenal side of the membrane. N77 and N185 each carry an N-linked (GlcNAc...) asparagine glycan. Residues W202 and S246 each contribute to the 2-oxoglutarate site. H257 contacts Fe cation. 266-268 (RCH) is a 2-oxoglutarate binding site. Fe cation is bound at residue H302. R315 lines the 2-oxoglutarate pocket.

This sequence belongs to the aspartyl/asparaginyl beta-hydroxylase family. It depends on Fe cation as a cofactor.

The protein localises to the membrane. Its function is as follows. May function as 2-oxoglutarate-dependent dioxygenase. This is Aspartate beta-hydroxylase domain-containing protein 2 (Asphd2) from Rattus norvegicus (Rat).